A 1334-amino-acid chain; its full sequence is Putative transmembrane protein ORF1334 (1334 aa).

The chain crosses the membrane as a helical span at residues 53-73; the sequence is VSIVVLVLTLFIIPVIIPPAH. The disordered stretch occupies residues 1107-1135; that stretch reads LSASTTPPSSTTPTPPSSSSSSSSSSSIS. Positions 1110–1135 are enriched in low complexity; sequence STTPPSSTTPTPPSSSSSSSSSSSIS. The next 3 membrane-spanning stretches (helical) occupy residues 1256 to 1276, 1292 to 1312, and 1313 to 1333; these read AVLP…SFFI, IIYI…TSVV, and YGTV…SRSQ.

Its subcellular location is the host membrane. The polypeptide is Putative transmembrane protein ORF1334 (Acidianus two-tailed virus (ATV)).